The chain runs to 370 residues: Queuine tRNA-ribosyltransferase (370 aa).

Residue Asp89 is the Proton acceptor of the active site. Substrate-binding positions include 89-93 (DSGGF), Asp143, Gln187, and Gly214. Residues 245 to 251 (GVGTPED) form an RNA binding region. Residue Asp264 is the Nucleophile of the active site. Positions 269 to 273 (TRNAR) are RNA binding; important for wobble base 34 recognition. Zn(2+) is bound by residues Cys302, Cys304, Cys307, and His333.

Belongs to the queuine tRNA-ribosyltransferase family. Homodimer. Within each dimer, one monomer is responsible for RNA recognition and catalysis, while the other monomer binds to the replacement base PreQ1. Zn(2+) is required as a cofactor.

It catalyses the reaction 7-aminomethyl-7-carbaguanine + guanosine(34) in tRNA = 7-aminomethyl-7-carbaguanosine(34) in tRNA + guanine. It functions in the pathway tRNA modification; tRNA-queuosine biosynthesis. Catalyzes the base-exchange of a guanine (G) residue with the queuine precursor 7-aminomethyl-7-deazaguanine (PreQ1) at position 34 (anticodon wobble position) in tRNAs with GU(N) anticodons (tRNA-Asp, -Asn, -His and -Tyr). Catalysis occurs through a double-displacement mechanism. The nucleophile active site attacks the C1' of nucleotide 34 to detach the guanine base from the RNA, forming a covalent enzyme-RNA intermediate. The proton acceptor active site deprotonates the incoming PreQ1, allowing a nucleophilic attack on the C1' of the ribose to form the product. After dissociation, two additional enzymatic reactions on the tRNA convert PreQ1 to queuine (Q), resulting in the hypermodified nucleoside queuosine (7-(((4,5-cis-dihydroxy-2-cyclopenten-1-yl)amino)methyl)-7-deazaguanosine). The polypeptide is Queuine tRNA-ribosyltransferase (Azoarcus sp. (strain BH72)).